The primary structure comprises 228 residues: Glycosylphosphatidylinositol-anchored high density lipoprotein-binding protein 1 (228 aa).

Positions 1-22 (MKALRAVLLILLLSGQPGSGWA) are cleaved as a signal peptide. The disordered stretch occupies residues 21 to 32 (WAQEDGDADPEP). The important for LPL transport to the lumenal surface of endothelial cells stretch occupies residues 24–48 (EDGDADPEPENYNYDDDDDEEEEEE). Residues 24 to 49 (EDGDADPEPENYNYDDDDDEEEEEET) show a composition bias toward acidic residues. Residue Tyr35 is modified to Sulfotyrosine. A UPAR/Ly6 domain is found at 61-148 (LQCYFCQVLH…PWQNPQVQNP (88 aa)). Disulfide bonds link Cys63–Cys88, Cys66–Cys75, Cys81–Cys109, Cys113–Cys129, and Cys130–Cys135. Asn76 carries N-linked (GlcNAc...) asparagine glycosylation. The segment at 102–108 (LTTYSMW) is important for interaction with LPL. A disordered region spans residues 145–200 (VQNPLGGRADSPLESGTRHPQGGKFSHPQVVKAAHPQSDGANLPKSGKANQPQGSG). Gly198 carries the GPI-anchor amidated glycine lipid modification. Residues 199 to 228 (SGAGYPSGWTKFGNIALLLSFFTCLWASGA) constitute a propeptide, removed in mature form.

In terms of assembly, mostly monomer, but also homodimer and homooligomer. Interacts with lipoprotein lipase (LPL). Interacts with high affinity with high-density lipoprotein (HDL). Interacts with chylomicrons. Interacts with APOA5. In terms of processing, glycosylation of Asn-76 is critical for cell surface localization. Post-translationally, sulfation of a Tyr in the N-terminal acidic region increases the affinity for LPL. Detected in fat tissue. Detected on the luminal surface of capillary endothelial cells in heart, skeletal muscle and brown adipose tissue (at protein level). Detected in heart and brown adipose tissue. Expressed at lower levels in lung and liver.

The protein resides in the apical cell membrane. It localises to the basolateral cell membrane. It is found in the cell membrane. Functionally, mediates the transport of lipoprotein lipase LPL from the basolateral to the apical surface of endothelial cells in capillaries. Anchors LPL on the surface of endothelial cells in the lumen of blood capillaries. Thereby, plays an important role in lipolytic processing of chylomicrons by LPL, triglyceride metabolism and lipid homeostasis. Binds chylomicrons and phospholipid particles that contain APOA5. Binds high-density lipoprotein (HDL) and plays a role in the uptake of lipids from HDL. In Mus musculus (Mouse), this protein is Glycosylphosphatidylinositol-anchored high density lipoprotein-binding protein 1.